A 342-amino-acid polypeptide reads, in one-letter code: 11-beta-hydroxysteroid dehydrogenase-like 6 (342 aa).

A helical; Signal-anchor for type II membrane protein membrane pass occupies residues 10–30 (FLFPLLTLYALLVFYPTYQRL). NADP(+)-binding positions include 54–80 (GAASGIGEALAYEYGKRGAYLALVDIR) and aspartate 105. Serine 184 contributes to the substrate binding site. Tyrosine 197 acts as the Proton acceptor in catalysis. NADP(+) contacts are provided by residues 197 to 201 (YCASK) and lysine 201.

Belongs to the short-chain dehydrogenases/reductases (SDR) family.

It localises to the membrane. In Arabidopsis thaliana (Mouse-ear cress), this protein is 11-beta-hydroxysteroid dehydrogenase-like 6 (HSD6).